The primary structure comprises 258 residues: Imidazole glycerol phosphate synthase subunit HisF (258 aa).

Catalysis depends on residues Asp-11 and Asp-130.

This sequence belongs to the HisA/HisF family. As to quaternary structure, heterodimer of HisH and HisF.

It is found in the cytoplasm. The enzyme catalyses 5-[(5-phospho-1-deoxy-D-ribulos-1-ylimino)methylamino]-1-(5-phospho-beta-D-ribosyl)imidazole-4-carboxamide + L-glutamine = D-erythro-1-(imidazol-4-yl)glycerol 3-phosphate + 5-amino-1-(5-phospho-beta-D-ribosyl)imidazole-4-carboxamide + L-glutamate + H(+). Its pathway is amino-acid biosynthesis; L-histidine biosynthesis; L-histidine from 5-phospho-alpha-D-ribose 1-diphosphate: step 5/9. Its function is as follows. IGPS catalyzes the conversion of PRFAR and glutamine to IGP, AICAR and glutamate. The HisF subunit catalyzes the cyclization activity that produces IGP and AICAR from PRFAR using the ammonia provided by the HisH subunit. This chain is Imidazole glycerol phosphate synthase subunit HisF, found in Xanthomonas axonopodis pv. citri (strain 306).